Reading from the N-terminus, the 642-residue chain is Threonine--tRNA ligase (642 aa).

Positions 1–61 (MPVITLPDGS…ENDATLAIIT (61 aa)) constitute a TGS domain. Residues 243 to 534 (DHRKIGKQLD…LTEEFAGFFP (292 aa)) are catalytic. Positions 334, 385, and 511 each coordinate Zn(2+).

Belongs to the class-II aminoacyl-tRNA synthetase family. In terms of assembly, homodimer. It depends on Zn(2+) as a cofactor.

It is found in the cytoplasm. The catalysed reaction is tRNA(Thr) + L-threonine + ATP = L-threonyl-tRNA(Thr) + AMP + diphosphate + H(+). In terms of biological role, catalyzes the attachment of threonine to tRNA(Thr) in a two-step reaction: L-threonine is first activated by ATP to form Thr-AMP and then transferred to the acceptor end of tRNA(Thr). Also edits incorrectly charged L-seryl-tRNA(Thr). The chain is Threonine--tRNA ligase from Salmonella choleraesuis (strain SC-B67).